A 133-amino-acid chain; its full sequence is ATP synthase epsilon chain, chloroplastic (133 aa).

It belongs to the ATPase epsilon chain family. As to quaternary structure, F-type ATPases have 2 components, CF(1) - the catalytic core - and CF(0) - the membrane proton channel. CF(1) has five subunits: alpha(3), beta(3), gamma(1), delta(1), epsilon(1). CF(0) has three main subunits: a, b and c.

It localises to the plastid. The protein resides in the chloroplast thylakoid membrane. In terms of biological role, produces ATP from ADP in the presence of a proton gradient across the membrane. In Cyanidium caldarium (Red alga), this protein is ATP synthase epsilon chain, chloroplastic.